Reading from the N-terminus, the 888-residue chain is Glutamate receptor 3 (888 aa).

An N-terminal signal peptide occupies residues 1–22 (MGQSVLRAVFFLVLGLLGHSHG). The Extracellular segment spans residues 23-546 (GFPNTISIGG…GVFSFLDPLA (524 aa)). N-linked (GlcNAc...) asparagine glycans are attached at residues Asn57, Asn260, Asn374, Asn409, and Asn416. A disulfide bridge links Cys85 with Cys334. The L-glutamate site is built by Pro502, Thr504, and Arg509. The helical transmembrane segment at 547 to 567 (YEIWMCIVFAYIGVSVVLFLV) threads the bilayer. Topologically, residues 568–596 (SRFSPYEWHLEDNNEEPRDPQSPPDPPNE) are cytoplasmic. The helical; Pore-forming intramembrane region spans 597 to 612 (FGIFNSLWFSLGAFMQ). An intramembrane segment occupies 613-615 (QGC). Residue Cys615 is the site of S-palmitoyl cysteine attachment. Residues 616-621 (DISPRS) lie on the Cytoplasmic side of the membrane. Residues 622 to 642 (LSGRIVGGVWWFFTLIIISSY) traverse the membrane as a helical segment. The Extracellular portion of the chain corresponds to 643–817 (TANLAAFLTV…DKTSALSLSN (175 aa)). Positions 680, 681, and 731 each coordinate L-glutamate. An intrachain disulfide couples Cys744 to Cys799. The helical transmembrane segment at 818–838 (VAGVFYILVGGLGLAMMVALI) threads the bilayer. Over 839-888 (EFCYKSRAESKRMKLTKNTQNFKPAPATNTQNYATYREGYNVYGTESVKI) the chain is Cytoplasmic. The S-palmitoyl cysteine moiety is linked to residue Cys841. 2 positions are modified to phosphotyrosine: Tyr871 and Tyr881.

The protein belongs to the glutamate-gated ion channel (TC 1.A.10.1) family. GRIA3 subfamily. As to quaternary structure, homotetramer or heterotetramer of pore-forming glutamate receptor subunits. Tetramers may be formed by the dimerization of dimers. Interacts with PICK1, GRIP1 and GRIP2. Found in a complex with GRIA1, GRIA2, GRIA4, CNIH2, CNIH3, CACNG2, CACNG3, CACNG4, CACNG5, CACNG7 and CACNG8. Interacts with CACNG5. Found in a complex with GRIA1, GRIA2, GRIA4, DLG4, CACNG8 and CNIH2.

The protein resides in the cell membrane. It is found in the postsynaptic cell membrane. The protein localises to the postsynaptic density membrane. It catalyses the reaction Ca(2+)(in) = Ca(2+)(out). In terms of biological role, ionotropic glutamate receptor that functions as a ligand-gated cation channel, gated by L-glutamate and glutamatergic agonists such as alpha-amino-3-hydroxy-5-methyl-4-isoxazolepropionic acid (AMPA), quisqualic acid, and kainic acid. L-glutamate acts as an excitatory neurotransmitter at many synapses in the central nervous system and plays an important role in fast excitatory synaptic transmission by inducing long-term potentiation. Binding of the excitatory neurotransmitter L-glutamate induces a conformation change, leading to the opening of the cation channel, and thereby converts the chemical signal to an electrical impulse upon entry of calcium. The receptor then desensitizes rapidly and enters a transient inactive state, characterized by the presence of bound agonist. In the presence of CACNG8, shows resensitization which is characterized by a delayed accumulation of current flux upon continued application of glutamate. The sequence is that of Glutamate receptor 3 from Mus musculus (Mouse).